We begin with the raw amino-acid sequence, 164 residues long: UPF0304 protein Ent638_2838 (164 aa).

Belongs to the UPF0304 family.

The polypeptide is UPF0304 protein Ent638_2838 (Enterobacter sp. (strain 638)).